The chain runs to 620 residues: Glutathione-regulated potassium-efflux system protein KefC (620 aa).

12 consecutive transmembrane segments (helical) span residues 4-24 (HTLL…PIAV), 26-46 (LGLG…PWGL), 54-74 (SILH…GLEL), 90-110 (GALQ…FLGL), 114-134 (VAEL…MQAM), 149-169 (FAVL…IPLL), 178-198 (LGAF…VVLL), 218-238 (VFSA…EEVG), 270-290 (GLLL…GTLV), 294-314 (LRIL…LWLV), 327-347 (WFAV…GAAQ), and 359-379 (ALTL…VLLT). In terms of domain architecture, RCK N-terminal spans 399–518 (QPRVIVAGFG…AGVAMPERET (120 aa)). Residues 599 to 620 (QGTAEGKHSGEAADEPEVKPSI) form a disordered region.

The protein belongs to the monovalent cation:proton antiporter 2 (CPA2) transporter (TC 2.A.37) family. KefC subfamily. As to quaternary structure, homodimer. Interacts with the regulatory subunit KefF.

It is found in the cell inner membrane. Functionally, pore-forming subunit of a potassium efflux system that confers protection against electrophiles. Catalyzes K(+)/H(+) antiport. This chain is Glutathione-regulated potassium-efflux system protein KefC, found in Salmonella choleraesuis (strain SC-B67).